Here is a 114-residue protein sequence, read N- to C-terminus: Cytochrome c oxidase assembly protein cox16, mitochondrial (114 aa).

The chain crosses the membrane as a helical span at residues 29 to 49 (PFLLFGLPFMSVIVAGSFILT).

This sequence belongs to the COX16 family.

Its subcellular location is the mitochondrion inner membrane. Functionally, required for the assembly of the mitochondrial respiratory chain complex IV (CIV), also known as cytochrome c oxidase. May participate in merging the COX1 and COX2 assembly lines. The chain is Cytochrome c oxidase assembly protein cox16, mitochondrial (cox-9) from Neurospora crassa (strain ATCC 24698 / 74-OR23-1A / CBS 708.71 / DSM 1257 / FGSC 987).